Reading from the N-terminus, the 266-residue chain is DNA repair protein RecO (266 aa).

It belongs to the RecO family.

In terms of biological role, involved in DNA repair and RecF pathway recombination. The sequence is that of DNA repair protein RecO from Synechococcus elongatus (strain ATCC 33912 / PCC 7942 / FACHB-805) (Anacystis nidulans R2).